A 443-amino-acid chain; its full sequence is Methylenetetrahydrofolate--tRNA-(uracil-5-)-methyltransferase TrmFO (443 aa).

8–13 (GAGLAG) contacts FAD.

Belongs to the MnmG family. TrmFO subfamily. It depends on FAD as a cofactor.

The protein localises to the cytoplasm. The catalysed reaction is uridine(54) in tRNA + (6R)-5,10-methylene-5,6,7,8-tetrahydrofolate + NADH + H(+) = 5-methyluridine(54) in tRNA + (6S)-5,6,7,8-tetrahydrofolate + NAD(+). It carries out the reaction uridine(54) in tRNA + (6R)-5,10-methylene-5,6,7,8-tetrahydrofolate + NADPH + H(+) = 5-methyluridine(54) in tRNA + (6S)-5,6,7,8-tetrahydrofolate + NADP(+). Its function is as follows. Catalyzes the folate-dependent formation of 5-methyl-uridine at position 54 (M-5-U54) in all tRNAs. This chain is Methylenetetrahydrofolate--tRNA-(uracil-5-)-methyltransferase TrmFO, found in Thermus thermophilus (strain ATCC BAA-163 / DSM 7039 / HB27).